Consider the following 579-residue polypeptide: Isocitrate dehydrogenase kinase/phosphatase (579 aa).

ATP-binding positions include 324–330 (ADGTPGM) and K345. D380 is a catalytic residue.

The protein belongs to the AceK family.

Its subcellular location is the cytoplasm. The enzyme catalyses L-seryl-[isocitrate dehydrogenase] + ATP = O-phospho-L-seryl-[isocitrate dehydrogenase] + ADP + H(+). In terms of biological role, bifunctional enzyme which can phosphorylate or dephosphorylate isocitrate dehydrogenase (IDH) on a specific serine residue. This is a regulatory mechanism which enables bacteria to bypass the Krebs cycle via the glyoxylate shunt in response to the source of carbon. When bacteria are grown on glucose, IDH is fully active and unphosphorylated, but when grown on acetate or ethanol, the activity of IDH declines drastically concomitant with its phosphorylation. The protein is Isocitrate dehydrogenase kinase/phosphatase of Xanthomonas axonopodis pv. citri (strain 306).